The following is a 545-amino-acid chain: Dual specificity calcium/calmodulin-dependent 3',5'-cyclic nucleotide phosphodiesterase 1A (545 aa).

2 calmodulin-binding regions span residues 24–44 and 114–137; these read TEKM…QLEK and EKPK…MYRK. Positions 142–522 constitute a PDEase domain; sequence VGLTYPAAVI…ERWKELAAQG (381 aa). Histidine 219 serves as the catalytic Proton donor. 4 residues coordinate Zn(2+): histidine 223, histidine 259, aspartate 260, and aspartate 366. Residue aspartate 260 participates in Mg(2+) binding. Positions 526–545 are disordered; that stretch reads LHKNSEELGNTEEKHADTRP.

This sequence belongs to the cyclic nucleotide phosphodiesterase family. PDE1 subfamily. Homodimer. Interacts with YWHAZ. Requires Zn(2+) as cofactor. Mg(2+) is required as a cofactor. As to expression, expressed in brain, kidney and testis.

It localises to the cell projection. The protein resides in the cilium. The protein localises to the flagellum. The enzyme catalyses a nucleoside 3',5'-cyclic phosphate + H2O = a nucleoside 5'-phosphate + H(+). It carries out the reaction 3',5'-cyclic GMP + H2O = GMP + H(+). The catalysed reaction is 3',5'-cyclic AMP + H2O = AMP + H(+). Type I PDE are activated by the binding of calmodulin in the presence of Ca(2+). With respect to regulation, activated by the binding of calmodulin in the presence of Ca(2+). Its function is as follows. Calcium/calmodulin-dependent cyclic nucleotide phosphodiesterase with a dual specificity for the second messengers cGMP and cAMP, which are key regulators of many important physiological processes. Has a higher efficiency with cGMP compared to cAMP. The chain is Dual specificity calcium/calmodulin-dependent 3',5'-cyclic nucleotide phosphodiesterase 1A from Mus musculus (Mouse).